Here is a 422-residue protein sequence, read N- to C-terminus: UPF0229 protein SO_2883 (422 aa).

Positions 60–111 are disordered; that stretch reads SEPMFHQGKGGVRDRVHPGNDQFTRGDKIDRPQGGSGGGAGKGDASDSGEGN. The segment covering 70–90 has biased composition (basic and acidic residues); it reads GVRDRVHPGNDQFTRGDKIDR.

It belongs to the UPF0229 family.

In Shewanella oneidensis (strain ATCC 700550 / JCM 31522 / CIP 106686 / LMG 19005 / NCIMB 14063 / MR-1), this protein is UPF0229 protein SO_2883.